A 411-amino-acid polypeptide reads, in one-letter code: Receptor GIN3 (411 aa).

Over 1–99 the chain is Extracellular; it reads MSGFVAGEEA…LLPILPHPRN (99 aa). The helical transmembrane segment at 100-120 threads the bilayer; that stretch reads IPIIVPLFCVFTVMTSLAVGL. Over 121 to 134 the chain is Cytoplasmic; that stretch reads RLWSRQKVAGGIRS. A helical membrane pass occupies residues 135–155; it reads FDWLALAGFGLTIIYGAVSVY. Residues 156-181 are Extracellular-facing; sequence HSKVSGPYQAFYDRTWDQMKENYKVY. A helical membrane pass occupies residues 182–202; the sequence is LVLTIMYPFIMGLIKISLLLF. Residues 203–227 lie on the Cytoplasmic side of the membrane; sequence YYRVATLNYVQWAVYATGSLTIANS. The helical transmembrane segment at 228 to 248 threads the bilayer; the sequence is IAAIITHCLAFMPIDFWNHFL. Residues 249 to 262 are Extracellular-facing; sequence QSPFKFNSRTPMLV. A helical transmembrane segment spans residues 263–283; it reads FGAVYILTDVAILIIPMPMVF. The Cytoplasmic portion of the chain corresponds to 284-292; the sequence is QLKLYPREK. The chain crosses the membrane as a helical span at residues 293 to 313; that stretch reads VIAVIAFSLGGVACVASGFRI. The Extracellular segment spans residues 314–328; the sequence is WAIDEFQNYSGKNSS. 2 N-linked (GlcNAc...) asparagine glycosylation sites follow: Asn-321 and Asn-326. Residues 329–349 form a helical membrane-spanning segment; that stretch reads GLMIDAWTMIELNLTLICASA. Topologically, residues 350–411 are cytoplasmic; that stretch reads PAIRALAIHY…QSPVIPKEVV (62 aa). A disordered region spans residues 371 to 411; that stretch reads FSSSGATRGSKSAGSSGKSKTPESEKSMQVSQSPVIPKEVV. The span at 372–389 shows a compositional bias: low complexity; it reads SSSGATRGSKSAGSSGKS.

The protein belongs to the SAT4 family. As to quaternary structure, interacts with guanine nucleotide-binding protein alpha GPA2; to activate adenylate cyclase and positively regulate nematode trap formation.

The protein resides in the cell membrane. Receptor that senses nematode-derived signals at the cell surface and signals via adenylate cyclase to positively regulate trap formation for nematode capture. This is Receptor GIN3 from Arthrobotrys oligospora (strain ATCC 24927 / CBS 115.81 / DSM 1491) (Nematode-trapping fungus).